The chain runs to 820 residues: Crinkler effector protein 108 (820 aa).

A signal peptide spans 1 to 17 (MVKLYCAVVGVAGSAFS). Positions 18 to 55 (VRVDESDTVDDLKDAIKAKKPNDFKDIDADKLELYVAK) are LQLFLAK domain. Residues 58 to 111 (GVWLTEADVKSGVADITGLVRLEVVRAKLFSVGLSDEVVSEVDAQEEAAGRGPV) are DWL domain. Positions 112–117 (NVLVVV) match the HVLVXXP motif motif. The Host nuclear localization signal signature appears at 118 to 124 (PMKKRRV). Positions 125–820 (DAGVDEERRF…MHYDDDEADL (696 aa)) are C-terminal DC effector domain. N-linked (GlcNAc...) asparagine glycans are attached at residues asparagine 268, asparagine 371, and asparagine 703. The hhH DNA-binding domain stretch occupies residues 754-791 (NINTASFHELRRLEGVGDATAAKIIAERTIRRFSNLED).

Belongs to the Crinkler effector family.

Its subcellular location is the secreted. It is found in the host nucleus. Secreted effector that suppresses plant basal defense and promotes plant susceptibility via targeting promoters of host HSP gene and thus inhibiting their expression. CRN108 binds directly to heat shock elements (HSEs) 5'-GAAnnTTC-3' and interferes with the association of the HSE with the plant heat shock transcription factors, which initializes HSP gene expression in response to stress. This chain is Crinkler effector protein 108, found in Phytophthora sojae (Soybean stem and root rot agent).